A 249-amino-acid chain; its full sequence is tRNA pseudouridine synthase A (249 aa).

Asp-53 functions as the Nucleophile in the catalytic mechanism. Tyr-111 provides a ligand contact to substrate.

It belongs to the tRNA pseudouridine synthase TruA family. As to quaternary structure, homodimer.

It catalyses the reaction uridine(38/39/40) in tRNA = pseudouridine(38/39/40) in tRNA. Its function is as follows. Formation of pseudouridine at positions 38, 39 and 40 in the anticodon stem and loop of transfer RNAs. The protein is tRNA pseudouridine synthase A of Streptococcus equi subsp. equi (strain 4047).